Reading from the N-terminus, the 183-residue chain is I-kappa-B like protein N2 (183 aa).

2 ANK repeats span residues D62–L95 and C99–A129. Residues P163–E183 form a disordered region.

The protein belongs to the polydnaviridae I-Kappa-B like protein family.

Its function is as follows. Suppresses the host immune response through NF-kappa-B inactivation. Possesses ankyrin repeat domains required for NF-kappa-B binding but lacks the regulatory regions required for dissociation from NF-kappa-B and degradation. Therefore, prevents host NF-kappa-B release and subsequent activation. The protein is I-kappa-B like protein N2 (N5) of Microplitis demolitor (Parasitoid wasp).